A 545-amino-acid polypeptide reads, in one-letter code: MAKDIQFSEEARRSMLKGVDTLANAVKVTLGPKGRNVVLEKKFGSPLITNDGVTIAKEIELEDAFENMGAKLVAEVASKTNDIAGDGTTTATVLAQAMIREGLKNVTSGANPMGIRKGIEKATAAAVKELKAISKPIEGRESIAQVAAISSADEEVGQIIAEAMERVGNDGVITIEESKGFSTELEVVEGMQFDRGYASPYMVSDSDKMEAVLDNPYVLITDKKITNIQEVLPVLEQVVQQSRPVLIIAEDVEGEALATLVLNKLRGTFNAVAVKAPGFGDRRKAMLEDIAILTGGQVITEDLGLDLKSATIESLGRAAKVVVTKENTTIVEGAGDPEQISGRVNQLKAQVEETTSEFDKEKLQERLAKLAGGVAVLKVGAATETEMKERKLRIEDALNSTRAAVEEGIVAGGGTALVNVIKAVKAVDATGDEATGVNIVLRALEEPVRQIAHNAGLEGSIIVEKLKAEEVGVGYNAATGEYVNMVETGILDPVKVTRSALQNAASVSAMFLTTEAVIADKPEENAGGADMGGMGGMGGGMPGMM.

ATP-binding positions include 29 to 32, 86 to 90, glycine 413, 476 to 478, and aspartate 492; these read TLGP, DGTTT, and NAA.

It belongs to the chaperonin (HSP60) family. In terms of assembly, forms a cylinder of 14 subunits composed of two heptameric rings stacked back-to-back. Interacts with the co-chaperonin GroES.

Its subcellular location is the cytoplasm. The enzyme catalyses ATP + H2O + a folded polypeptide = ADP + phosphate + an unfolded polypeptide.. Its function is as follows. Together with its co-chaperonin GroES, plays an essential role in assisting protein folding. The GroEL-GroES system forms a nano-cage that allows encapsulation of the non-native substrate proteins and provides a physical environment optimized to promote and accelerate protein folding. The sequence is that of Chaperonin GroEL from Shouchella clausii (strain KSM-K16) (Alkalihalobacillus clausii).